A 580-amino-acid chain; its full sequence is MAKMRPSVSLDTWREYFRRGDSDIFGIIDHAIMVAAADWPKEFKSRSDRIAELLFSCKVSRCIGCDHLELSIAGDEAAVEIVGVGGGGDRGDSGVATGEGEEASVSVDEVMRIRDILSNKDDEKDSVLLESLRKLESMSMSVDILKDTEIGKAVNGLRRHSSDKISKLAKTLFAEWKRLVDQWMNTPEEMAGTEGTPESLNLSVIDEEEAFPSPPHDLDIYAPEPNGFELSQILDCLDCDGNPRHSVESKHERKSQSSAGRRPKGTNDANVVGRYCNDQQTRREEADVRPMKHSATDVVEPKRQTKQSREQMVSAIQRKPTAVTEQKRKLAGPQQDKLKALDPDSKFEFAKRKLQESYHQHENAKRQRTIQVLETIPKQNKVQKPQLKRPATRRYIYWYFWSSEFPGYELPSLILNLANPRDSSSQFSRHDELMIDIPVYFGLVLVQIDKAEMVDEMMIFKKMSVLLTEKDFVDAIVSVSLKDLTRSLFVRFEAKACPKFDLIHKTSVETVRCVGKTFMHMLSKVSREFPPRNRTHPGGLLYQRFDPTHLSLARQQVAICKETDSQYPHEIVIHWTSASA.

Residues 108-183 (DEVMRIRDIL…AEWKRLVDQW (76 aa)) form the TFIIS N-terminal domain. Composition is skewed to basic and acidic residues over residues 244–255 (RHSVESKHERKS), 280–290 (QTRREEADVRP), and 299–309 (VEPKRQTKQSR). A disordered region spans residues 244–337 (RHSVESKHER…RKLAGPQQDK (94 aa)). Residues 347–368 (FEFAKRKLQESYHQHENAKRQR) adopt a coiled-coil conformation.

It belongs to the Mediator complex subunit 26 family. As to quaternary structure, component of the Mediator complex.

It is found in the nucleus. Its function is as follows. Component of the Mediator complex, a coactivator involved in the regulated transcription of nearly all RNA polymerase II-dependent genes. Mediator functions as a bridge to convey information from gene-specific regulatory proteins to the basal RNA polymerase II transcription machinery. The Mediator complex, having a compact conformation in its free form, is recruited to promoters by direct interactions with regulatory proteins and serves for the assembly of a functional preinitiation complex with RNA polymerase II and the general transcription factors. May play a role in transcription elongation. This Arabidopsis thaliana (Mouse-ear cress) protein is Probable mediator of RNA polymerase II transcription subunit 26a (MED26A).